The sequence spans 212 residues: Thymidylate kinase (212 aa).

Residue 13 to 20 (GLEGAGKS) coordinates ATP.

It belongs to the thymidylate kinase family.

The enzyme catalyses dTMP + ATP = dTDP + ADP. Functionally, phosphorylation of dTMP to form dTDP in both de novo and salvage pathways of dTTP synthesis. In Legionella pneumophila (strain Paris), this protein is Thymidylate kinase.